A 540-amino-acid polypeptide reads, in one-letter code: Chaperonin GroEL (540 aa).

ATP contacts are provided by residues 30–33 (TLGP), Lys51, 87–91 (DGTTT), Gly415, 479–481 (NAA), and Asp495.

This sequence belongs to the chaperonin (HSP60) family. In terms of assembly, forms a cylinder of 14 subunits composed of two heptameric rings stacked back-to-back. Interacts with the co-chaperonin GroES.

Its subcellular location is the cytoplasm. The catalysed reaction is ATP + H2O + a folded polypeptide = ADP + phosphate + an unfolded polypeptide.. Together with its co-chaperonin GroES, plays an essential role in assisting protein folding. The GroEL-GroES system forms a nano-cage that allows encapsulation of the non-native substrate proteins and provides a physical environment optimized to promote and accelerate protein folding. The protein is Chaperonin GroEL of Raoultella planticola (Klebsiella planticola).